The sequence spans 88 residues: Large ribosomal subunit protein eL37 (88 aa).

Residues cysteine 17, cysteine 20, cysteine 32, and cysteine 35 each contribute to the Zn(2+) site. The segment at 17–35 adopts a C4-type zinc-finger fold; the sequence is CNRCGRRSFHVQKKTCSSC.

Belongs to the eukaryotic ribosomal protein eL37 family. The cofactor is Zn(2+).

In terms of biological role, binds to the 23S rRNA. This is Large ribosomal subunit protein eL37 (RPL37) from Candida albicans (Yeast).